A 730-amino-acid chain; its full sequence is Rap1 GTPase-activating protein 2 (730 aa).

The region spanning Ile247–Leu463 is the Rap-GAP domain. Disordered regions lie at residues Met510–Ser668 and Ser698–His730. 2 stretches are compositionally biased toward polar residues: residues Gly535–Ser557 and His597–Ser612. Positions Pro617–Gly630 are enriched in basic and acidic residues. Low complexity predominate over residues Arg631–Ser651. Positions Arg699 to Ser712 are enriched in polar residues.

It is found in the cytoplasm. Its function is as follows. GTPase activator for the nuclear Ras-related regulatory protein RAP-1A (KREV-1), converting it to the putatively inactive GDP-bound state. This chain is Rap1 GTPase-activating protein 2 (RAP1GAP2), found in Gallus gallus (Chicken).